A 1362-amino-acid chain; its full sequence is ATP-dependent RNA helicase dhx29 (1362 aa).

Basic residues predominate over residues 1-10 (MGGKNKKNRH). The interval 1-76 (MGGKNKKNRH…FASSSDSGVS (76 aa)) is disordered. Residues 18 to 27 (GATAAANRPR) are compositionally biased toward low complexity. The span at 28-41 (AAAEPRPGGEDAAK) shows a compositional bias: basic and acidic residues. The span at 66 to 76 (SFASSSDSGVS) shows a compositional bias: low complexity. Positions 89–109 (EAKLEKRIISLINEHKKLNSN) form a coiled coil. Disordered regions lie at residues 182–215 (QRAR…LKGN) and 229–257 (EQGS…DPNE). Residues 231 to 242 (GSDDDDDDDDVK) are compositionally biased toward acidic residues. Residues 243-257 (EEEKETTLEKFDPNE) show a composition bias toward basic and acidic residues. Residues 285–305 (QKEAQERIRGYQQEMKSLEDH) are a coiled coil. The tract at residues 317–336 (VKSESKQPKPALPPSEDEPL) is disordered. The 174-residue stretch at 576 to 749 (LETLKRHRVI…FTHCPIIRIS (174 aa)) folds into the Helicase ATP-binding domain. 589–596 (GETGSGKS) serves as a coordination point for ATP. A DEAH box motif is present at residues 696 to 699 (DEVH). The Helicase C-terminal domain maps to 852 to 1021 (DISPEYRNVE…ELCLHIMKCD (170 aa)).

The protein belongs to the DEAD box helicase family. DEAH subfamily. Part of the 43S pre-initiation complex (PIC).

The protein localises to the cytoplasm. It carries out the reaction ATP + H2O = ADP + phosphate + H(+). Functionally, ATP-binding RNA helicase involved in translation initiation. Part of the 43S pre-initiation complex that is required for efficient initiation on mRNAs of higher eukaryotes with structured 5'-UTRs by promoting efficient NTPase-dependent 48S complex formation. Specifically binds to the 40S ribosome near the mRNA entrance. Does not possess a processive helicase activity. The polypeptide is ATP-dependent RNA helicase dhx29 (Xenopus laevis (African clawed frog)).